We begin with the raw amino-acid sequence, 231 residues long: Ureidoacrylate amidohydrolase RutB (231 aa).

The active-site Proton acceptor is Asp-25. Lys-134 is an active-site residue. Cys-167 acts as the Nucleophile in catalysis.

The protein belongs to the isochorismatase family. RutB subfamily.

The catalysed reaction is (Z)-3-ureidoacrylate + H2O + H(+) = (Z)-3-aminoacrylate + NH4(+) + CO2. It carries out the reaction (Z)-3-ureidoacrylate + H2O = (Z)-3-aminoacrylate + carbamate + H(+). The enzyme catalyses (Z)-2-methylureidoacrylate + H2O + H(+) = (Z)-2-methylaminoacrylate + NH4(+) + CO2. Hydrolyzes ureidoacrylate to form aminoacrylate and carbamate. The carbamate hydrolyzes spontaneously, thereby releasing one of the nitrogen atoms of the pyrimidine ring as ammonia and one of its carbon atoms as CO2. The protein is Ureidoacrylate amidohydrolase RutB of Escherichia coli O157:H7 (strain EC4115 / EHEC).